We begin with the raw amino-acid sequence, 591 residues long: Aspartate--tRNA(Asp/Asn) ligase (591 aa).

An L-aspartate-binding site is contributed by Glu176. Residues 200–203 (QLFK) are aspartate. Position 222 (Arg222) interacts with L-aspartate. ATP-binding positions include 222–224 (RDE) and Gln231. Position 450 (His450) interacts with L-aspartate. Position 484 (Glu484) interacts with ATP. Residue Arg491 coordinates L-aspartate. 536–539 (GLDR) lines the ATP pocket.

It belongs to the class-II aminoacyl-tRNA synthetase family. Type 1 subfamily. In terms of assembly, homodimer.

The protein localises to the cytoplasm. It catalyses the reaction tRNA(Asx) + L-aspartate + ATP = L-aspartyl-tRNA(Asx) + AMP + diphosphate. Aspartyl-tRNA synthetase with relaxed tRNA specificity since it is able to aspartylate not only its cognate tRNA(Asp) but also tRNA(Asn). Reaction proceeds in two steps: L-aspartate is first activated by ATP to form Asp-AMP and then transferred to the acceptor end of tRNA(Asp/Asn). The sequence is that of Aspartate--tRNA(Asp/Asn) ligase from Bacillus mycoides (strain KBAB4) (Bacillus weihenstephanensis).